The chain runs to 139 residues: Nucleoside diphosphate kinase (139 aa).

6 residues coordinate ATP: K10, F58, R86, T92, R104, and N114. H117 serves as the catalytic Pros-phosphohistidine intermediate.

The protein belongs to the NDK family. Homotetramer. Requires Mg(2+) as cofactor.

The protein resides in the cytoplasm. It carries out the reaction a 2'-deoxyribonucleoside 5'-diphosphate + ATP = a 2'-deoxyribonucleoside 5'-triphosphate + ADP. The enzyme catalyses a ribonucleoside 5'-diphosphate + ATP = a ribonucleoside 5'-triphosphate + ADP. In terms of biological role, major role in the synthesis of nucleoside triphosphates other than ATP. The ATP gamma phosphate is transferred to the NDP beta phosphate via a ping-pong mechanism, using a phosphorylated active-site intermediate. In Rhodococcus opacus (strain B4), this protein is Nucleoside diphosphate kinase.